An 810-amino-acid chain; its full sequence is Cell division control protein 48 homolog E (810 aa).

S2 bears the N-acetylserine mark. S41 is subject to Phosphoserine. ATP contacts are provided by residues 248–255 (GPPGSGKT) and 521–528 (GPPGCGKT).

It belongs to the AAA ATPase family.

It localises to the nucleus. The protein localises to the cytoplasm. The protein resides in the cytoskeleton. Its subcellular location is the phragmoplast. Its function is as follows. Probably functions in cell division and growth processes. Interacts with certain SNAREs as part of specialized membrane fusion events where vesicles from the same organelle fuse (homotypic fusion). The protein is Cell division control protein 48 homolog E (CDC48E) of Arabidopsis thaliana (Mouse-ear cress).